The sequence spans 372 residues: Ephrin type-A receptor 8 (372 aa).

Residues 2-263 enclose the Protein kinase domain; that stretch reads IHIEKIIGSG…HVVSVLEALV (262 aa). ATP contacts are provided by residues 8–16 and Lys-34; that span reads IGSGESGEV. Asp-127 functions as the Proton acceptor in the catalytic mechanism. Tyr-206 is subject to Phosphotyrosine; by autocatalysis. The 76-residue stretch at 297 to 372 folds into the SAM domain; the sequence is NGDLTVGDWL…SCTQGPRRHL (76 aa). Residues 370–372 carry the PDZ-binding motif; it reads RHL.

In terms of assembly, heterotetramer upon binding of the ligand. The heterotetramer is composed of an ephrin dimer and a receptor dimer. Oligomerization is probably required to induce biological responses. May also form heterodimers with other ephrin receptors. Interacts with FYN; possible downstream effector of EPHA8 in regulation of cell adhesion. Interacts with PIK3CG; regulates integrin-mediated cell adhesion to substrate. Interacts with TIAM1; regulates clathrin-mediated endocytosis of EPHA8. Interacts with ANKS1A and ANKS1B; EPHA8 kinase activity-independent but stimulated by EPHA8 ubiquitination. Phosphorylated. Phosphorylation is stimulated upon binding of its ligands including EFNA2, EFNA3 and EFNA5. Autophosphorylation on Tyr-206 modulates tyrosine kinase activity. Post-translationally, ubiquitinated. Ubiquitination by CBL regulates the receptor stability and activity through proteasomal degradation. ANKS1A prevents ubiquitination and degradation. As to expression, most abundant in brain.

Its subcellular location is the cell membrane. The protein localises to the cell projection. It localises to the early endosome membrane. The enzyme catalyses L-tyrosyl-[protein] + ATP = O-phospho-L-tyrosyl-[protein] + ADP + H(+). Its function is as follows. Receptor tyrosine kinase which binds promiscuously GPI-anchored ephrin-A family ligands residing on adjacent cells, leading to contact-dependent bidirectional signaling into neighboring cells. The signaling pathway downstream of the receptor is referred to as forward signaling while the signaling pathway downstream of the ephrin ligand is referred to as reverse signaling. The GPI-anchored ephrin-A EFNA2, EFNA3, and EFNA5 are able to activate EPHA8 through phosphorylation. With EFNA5 may regulate integrin-mediated cell adhesion and migration on fibronectin substrate but also neurite outgrowth. During development of the nervous system also plays a role in axon guidance. Downstream effectors of the EPHA8 signaling pathway include FYN which promotes cell adhesion upon activation by EPHA8 and the MAP kinases in the stimulation of neurite outgrowth. The polypeptide is Ephrin type-A receptor 8 (Epha8) (Rattus norvegicus (Rat)).